The sequence spans 166 residues: Putative peroxisomal peroxiredoxin (166 aa).

The 162-residue stretch at 5–166 folds into the Thioredoxin domain; sequence FPEDVKFLYI…SGVDAVLAAL (162 aa). C56 acts as the Cysteine sulfenic acid (-SOH) intermediate in catalysis.

The protein belongs to the peroxiredoxin family. Prx5 subfamily. As to quaternary structure, homodimer; disulfide-linked, upon oxidation.

It carries out the reaction a hydroperoxide + [protein]-dithiol = [protein]-disulfide + an alcohol + H2O. In terms of biological role, thiol-specific peroxidase that catalyzes the reduction of hydrogen peroxide and organic hydroperoxides to water and alcohols, respectively. Plays a role in cell protection against oxidative stress by detoxifying peroxides and as sensor of hydrogen peroxide-mediated signaling events. The chain is Putative peroxisomal peroxiredoxin from Lipomyces kononenkoae (Yeast).